A 237-amino-acid chain; its full sequence is Ankyrin repeat protein 14 (237 aa).

2 ANK repeats span residues 27 to 56 (RGET…DVNI) and 60 to 90 (NGYT…TLDC).

In terms of biological role, may be involved in virus-host protein interaction through the ankyrin repeats. This Vaccinia virus (strain Western Reserve) (VACV) protein is Ankyrin repeat protein 14.